Here is a 205-residue protein sequence, read N- to C-terminus: Methylthioribulose-1-phosphate dehydratase (205 aa).

Zn(2+)-binding residues include histidine 98 and histidine 100.

It belongs to the aldolase class II family. MtnB subfamily. Zn(2+) serves as cofactor.

The enzyme catalyses 5-(methylsulfanyl)-D-ribulose 1-phosphate = 5-methylsulfanyl-2,3-dioxopentyl phosphate + H2O. The protein operates within amino-acid biosynthesis; L-methionine biosynthesis via salvage pathway; L-methionine from S-methyl-5-thio-alpha-D-ribose 1-phosphate: step 2/6. Its function is as follows. Catalyzes the dehydration of methylthioribulose-1-phosphate (MTRu-1-P) into 2,3-diketo-5-methylthiopentyl-1-phosphate (DK-MTP-1-P). This chain is Methylthioribulose-1-phosphate dehydratase, found in Gluconacetobacter diazotrophicus (strain ATCC 49037 / DSM 5601 / CCUG 37298 / CIP 103539 / LMG 7603 / PAl5).